Consider the following 390-residue polypeptide: Succinate--CoA ligase [ADP-forming] subunit beta (390 aa).

The region spanning 9 to 248 (KEILRRHKAN…ITEEDPLEVQ (240 aa)) is the ATP-grasp domain. ATP-binding positions include lysine 50, 57 to 59 (GRG), glutamate 103, isoleucine 106, and glutamate 111. Asparagine 203 and aspartate 217 together coordinate Mg(2+). Residues asparagine 268 and 325-327 (GIV) contribute to the substrate site.

Belongs to the succinate/malate CoA ligase beta subunit family. As to quaternary structure, heterotetramer of two alpha and two beta subunits. Mg(2+) is required as a cofactor.

It carries out the reaction succinate + ATP + CoA = succinyl-CoA + ADP + phosphate. The enzyme catalyses GTP + succinate + CoA = succinyl-CoA + GDP + phosphate. It participates in carbohydrate metabolism; tricarboxylic acid cycle; succinate from succinyl-CoA (ligase route): step 1/1. Its function is as follows. Succinyl-CoA synthetase functions in the citric acid cycle (TCA), coupling the hydrolysis of succinyl-CoA to the synthesis of either ATP or GTP and thus represents the only step of substrate-level phosphorylation in the TCA. The beta subunit provides nucleotide specificity of the enzyme and binds the substrate succinate, while the binding sites for coenzyme A and phosphate are found in the alpha subunit. The sequence is that of Succinate--CoA ligase [ADP-forming] subunit beta from Leptospira borgpetersenii serovar Hardjo-bovis (strain JB197).